Reading from the N-terminus, the 316-residue chain is Beta-agarase (316 aa).

The first 18 residues, 1–18 (MKRKLFTICLASLQFACA), serve as a signal peptide directing secretion. A GH16 domain is found at 27 to 315 (YEWDIYPVPA…WIRVYTLVPE (289 aa)). Substrate-binding positions include Trp-78, 87–97 (QRDHVSVSDGF), and 101–103 (RAS). Glu-167 functions as the Nucleophile in the catalytic mechanism. Glu-172 acts as the Proton donor in catalysis. Residue Arg-197 participates in substrate binding.

Belongs to the glycosyl hydrolase 16 family.

It catalyses the reaction Hydrolysis of (1-&gt;4)-beta-D-galactosidic linkages in agarose, giving the tetramer as the predominant product.. In terms of biological role, cleaves the beta-1,4-linkages between beta-D-galactose and alpha-L-3,6-anhydro-galactose residues in agarose. Cleaves agarose in a random manner with retention of the anomeric-bond configuration, producing beta-anomers that give rise progressively to alpha-anomers when mutarotation takes place. This chain is Beta-agarase, found in Phocaeicola plebeius (strain DSM 17135 / JCM 12973 / CCUG 54634 / M2) (Bacteroides plebeius).